The primary structure comprises 417 residues: Type IV inositol polyphosphate 5-phosphatase 9 (417 aa).

Catalytic stretches follow at residues 258–273 (DRVI…ISLP) and 339–354 (KKRA…WYGN).

It belongs to the inositol polyphosphate 5-phosphatase family. As to expression, specifically expressed in roots.

It carries out the reaction a 1,2-diacyl-sn-glycero-3-phospho-(1D-myo-inositol-4,5-bisphosphate) + H2O = a 1,2-diacyl-sn-glycero-3-phospho-(1D-myo-inositol 4-phosphate) + phosphate. The enzyme catalyses a 1,2-diacyl-sn-glycero-3-phospho-(1D-myo-inositol-3,4,5-trisphosphate) + H2O = a 1,2-diacyl-sn-glycero-3-phospho-(1D-myo-inositol-3,4-bisphosphate) + phosphate. Its function is as follows. Has phosphatase activity toward PtdIns(4,5)P2 and at a lower extent toward PtdIns(3,4,5)P3 but not toward Ins(1,4,5)P3. Functions in salt stress response by regulating reactive oxygen species (ROS) production, endocytosis, Ca(2+) influx and stress-responsive genes expression. In Arabidopsis thaliana (Mouse-ear cress), this protein is Type IV inositol polyphosphate 5-phosphatase 9.